The sequence spans 447 residues: Phosphoglucosamine mutase (447 aa).

Residue Ser-104 is the Phosphoserine intermediate of the active site. Mg(2+)-binding residues include Ser-104, Asp-243, Asp-245, and Asp-247. Ser-104 carries the post-translational modification Phosphoserine.

It belongs to the phosphohexose mutase family. The cofactor is Mg(2+). In terms of processing, activated by phosphorylation.

The enzyme catalyses alpha-D-glucosamine 1-phosphate = D-glucosamine 6-phosphate. In terms of biological role, catalyzes the conversion of glucosamine-6-phosphate to glucosamine-1-phosphate. The polypeptide is Phosphoglucosamine mutase (Corynebacterium glutamicum (strain R)).